The primary structure comprises 371 residues: Glutamate 5-kinase (371 aa).

An ATP-binding site is contributed by K14. Positions 54, 141, and 153 each coordinate substrate. Residue 173–174 (TD) participates in ATP binding. Residues 280–357 (AGDLILDDGA…TQIEKLLGYI (78 aa)) enclose the PUA domain.

This sequence belongs to the glutamate 5-kinase family.

The protein localises to the cytoplasm. It catalyses the reaction L-glutamate + ATP = L-glutamyl 5-phosphate + ADP. The protein operates within amino-acid biosynthesis; L-proline biosynthesis; L-glutamate 5-semialdehyde from L-glutamate: step 1/2. Functionally, catalyzes the transfer of a phosphate group to glutamate to form L-glutamate 5-phosphate. In Aromatoleum aromaticum (strain DSM 19018 / LMG 30748 / EbN1) (Azoarcus sp. (strain EbN1)), this protein is Glutamate 5-kinase.